The sequence spans 297 residues: Phosphoribosylaminoimidazole-succinocarboxamide synthase (297 aa).

This sequence belongs to the SAICAR synthetase family.

The catalysed reaction is 5-amino-1-(5-phospho-D-ribosyl)imidazole-4-carboxylate + L-aspartate + ATP = (2S)-2-[5-amino-1-(5-phospho-beta-D-ribosyl)imidazole-4-carboxamido]succinate + ADP + phosphate + 2 H(+). The protein operates within purine metabolism; IMP biosynthesis via de novo pathway; 5-amino-1-(5-phospho-D-ribosyl)imidazole-4-carboxamide from 5-amino-1-(5-phospho-D-ribosyl)imidazole-4-carboxylate: step 1/2. The protein is Phosphoribosylaminoimidazole-succinocarboxamide synthase of Mycobacteroides abscessus (strain ATCC 19977 / DSM 44196 / CCUG 20993 / CIP 104536 / JCM 13569 / NCTC 13031 / TMC 1543 / L948) (Mycobacterium abscessus).